Consider the following 449-residue polypeptide: Sensor protein QseC (449 aa).

Topologically, residues 1–12 (MKFTQRLSLRVR) are cytoplasmic. The helical transmembrane segment at 13–33 (LTLIFLILASVTWLLSSFVAW) threads the bilayer. Over 34–156 (KQTTDNVDEL…QEWEYREDMA (123 aa)) the chain is Periplasmic. Residues 157–177 (LAIVAGQLIPWLVALPVMLII) traverse the membrane as a helical segment. Residues 178–449 (MMVLLGRELA…QGGFEAKVSW (272 aa)) are Cytoplasmic-facing. The Histidine kinase domain maps to 243-449 (DAAHELRSPL…QGGFEAKVSW (207 aa)). The residue at position 246 (His-246) is a Phosphohistidine; by autocatalysis.

It is found in the cell inner membrane. It catalyses the reaction ATP + protein L-histidine = ADP + protein N-phospho-L-histidine.. Functionally, member of a two-component regulatory system QseB/QseC. Activates the flagella regulon by activating transcription of FlhDC. May activate QseB by phosphorylation. This is Sensor protein QseC (qseC) from Escherichia coli O157:H7.